The chain runs to 485 residues: Dual specificity protein phosphatase CDC14B (485 aa).

A disordered region spans residues 1 to 38; that stretch reads MKRKSERRSAWATAPPCSRRSSSSSPGVKKSRSSTPQE. A Nucleolar localization signal motif is present at residues 1-54; that stretch reads MKRKSERRSAWATAPPCSRRSSSSSPGVKKSRSSTPQELHRLEQQDDLYLDITD. A compositionally biased stretch (low complexity) spans 15-28; the sequence is PPCSRRSSSSSPGV. Positions 44–198 are a; it reads QQDDLYLDIT…AMQYGFFNFN (155 aa). The segment at 199–212 is linker; the sequence is SFNLDEYEHYEKAE. Positions 213–379 are b; the sequence is NGDFNWIIPE…EGDYFRQKLR (167 aa). In terms of domain architecture, Tyrosine-protein phosphatase spans 215–374; sequence DFNWIIPERF…SSLWLEGDYF (160 aa). Cys-314 serves as the catalytic Phosphocysteine intermediate. The tract at residues 402 to 424 is disordered; sequence LNGLENQDNQEPEPYSDDDEVSG. The span at 409-422 shows a compositional bias: acidic residues; that stretch reads DNQEPEPYSDDDEV.

It belongs to the protein-tyrosine phosphatase family. Non-receptor class CDC14 subfamily. As to quaternary structure, interacts with FZR1/CDH1.

It is found in the nucleus. It localises to the nucleolus. The protein resides in the nucleoplasm. It catalyses the reaction O-phospho-L-tyrosyl-[protein] + H2O = L-tyrosyl-[protein] + phosphate. It carries out the reaction O-phospho-L-seryl-[protein] + H2O = L-seryl-[protein] + phosphate. The enzyme catalyses O-phospho-L-threonyl-[protein] + H2O = L-threonyl-[protein] + phosphate. Its function is as follows. Dual-specificity phosphatase involved in DNA damage response. Essential regulator of the G2 DNA damage checkpoint: following DNA damage, translocates to the nucleus and dephosphorylates FZR1/CDH1, a key activator of the anaphase promoting complex/cyclosome (APC/C). Dephosphorylates SIRT2 around early anaphase. Dephosphorylation of FZR1/CDH1 activates the APC/C, leading to the ubiquitination of PLK1, preventing entry into mitosis. Preferentially dephosphorylates proteins modified by proline-directed kinases. This is Dual specificity protein phosphatase CDC14B (Cdc14b) from Mus musculus (Mouse).